The following is a 503-amino-acid chain: Glutamate/gamma-aminobutyrate antiporter (503 aa).

33-43 (LHLVFFLLLGG) contacts L-glutamate. 7 helical membrane passes run 35–55 (LVFF…LCAA), 153–173 (FVVG…AYFI), 194–214 (VSTL…EASA), 232–252 (ILLV…VAAV), 366–386 (LTVV…FVLI), 407–427 (IIAG…FVPP), and 440–460 (MILL…YELH).

Belongs to the amino acid-polyamine-organocation (APC) superfamily. Glutamate:GABA antiporter (GGA) (TC 2.A.3.7) family.

Its subcellular location is the cell membrane. It carries out the reaction 4-aminobutanoate(in) + L-glutamate(out) = 4-aminobutanoate(out) + L-glutamate(in). Its function is as follows. Involved in glutaminase-dependent acid resistance. Exchanges extracellular glutamate (Glu) for intracellular gamma-aminobutyric acid (GABA) under acidic conditions. The chain is Glutamate/gamma-aminobutyrate antiporter (gadC) from Lactococcus lactis subsp. lactis (strain IL1403) (Streptococcus lactis).